Here is a 398-residue protein sequence, read N- to C-terminus: Phosphoglycerate kinase (398 aa).

Substrate contacts are provided by residues 21–23, R36, 59–62, R119, and R157; these read DFN and HLGR. Residues K208, G296, E327, and 354–357 each bind ATP; that span reads GGDS.

Belongs to the phosphoglycerate kinase family. As to quaternary structure, monomer.

The protein resides in the cytoplasm. The catalysed reaction is (2R)-3-phosphoglycerate + ATP = (2R)-3-phospho-glyceroyl phosphate + ADP. It functions in the pathway carbohydrate degradation; glycolysis; pyruvate from D-glyceraldehyde 3-phosphate: step 2/5. The sequence is that of Phosphoglycerate kinase from Streptococcus pyogenes serotype M5 (strain Manfredo).